The sequence spans 196 residues: ATP-dependent Clp protease proteolytic subunit (196 aa).

Residue Ser98 is the Nucleophile of the active site. Residue His123 is part of the active site.

The protein belongs to the peptidase S14 family. In terms of assembly, fourteen ClpP subunits assemble into 2 heptameric rings which stack back to back to give a disk-like structure with a central cavity, resembling the structure of eukaryotic proteasomes.

Its subcellular location is the cytoplasm. It catalyses the reaction Hydrolysis of proteins to small peptides in the presence of ATP and magnesium. alpha-casein is the usual test substrate. In the absence of ATP, only oligopeptides shorter than five residues are hydrolyzed (such as succinyl-Leu-Tyr-|-NHMec, and Leu-Tyr-Leu-|-Tyr-Trp, in which cleavage of the -Tyr-|-Leu- and -Tyr-|-Trp bonds also occurs).. Functionally, cleaves peptides in various proteins in a process that requires ATP hydrolysis. Has a chymotrypsin-like activity. Plays a major role in the degradation of misfolded proteins. ClpXP is involved in the complete degradation of the Site-2 clipped anti-sigma-W factor RsiW. This results in the release of SigW and the transcription activation of the genes under the control of the sigma-W factor. The sequence is that of ATP-dependent Clp protease proteolytic subunit from Geobacillus kaustophilus (strain HTA426).